Here is a 516-residue protein sequence, read N- to C-terminus: Glutamyl-tRNA(Gln) amidotransferase subunit B, mitochondrial (516 aa).

It belongs to the GatB/GatE family. GatB subfamily. Subunit of the heterotrimeric GatCAB amidotransferase (AdT) complex, composed of A, B and C subunits.

It is found in the mitochondrion. The catalysed reaction is L-glutamyl-tRNA(Gln) + L-glutamine + ATP + H2O = L-glutaminyl-tRNA(Gln) + L-glutamate + ADP + phosphate + H(+). Its function is as follows. Allows the formation of correctly charged Gln-tRNA(Gln) through the transamidation of misacylated Glu-tRNA(Gln) in the mitochondria. The reaction takes place in the presence of glutamine and ATP through an activated gamma-phospho-Glu-tRNA(Gln). The sequence is that of Glutamyl-tRNA(Gln) amidotransferase subunit B, mitochondrial from Drosophila melanogaster (Fruit fly).